A 64-amino-acid chain; its full sequence is DGYPKQKDGCKYSCTINHKFCNSVCKSNGGDYGYCWFWGLACWCEGLPDNKMWKYETNTCGGKK.

The LCN-type CS-alpha/beta domain maps to 1-61 (DGYPKQKDGC…MWKYETNTCG (61 aa)). Cystine bridges form between C10-C60, C14-C35, C21-C42, and C25-C44. G61 bears the Glycine amide mark.

It belongs to the long (4 C-C) scorpion toxin superfamily. Sodium channel inhibitor family. Beta subfamily. Expressed by the venom gland.

It is found in the secreted. Depressant insect beta-toxins cause a transient contraction paralysis followed by a slow flaccid paralysis. They bind voltage-independently at site-4 of sodium channels (Nav) and shift the voltage of activation toward more negative potentials thereby affecting sodium channel activation and promoting spontaneous and repetitive firing. This toxin is active only on insects. The polypeptide is Insect toxin OsI1 (Orthochirus scrobiculosus (Central Asian scorpion)).